We begin with the raw amino-acid sequence, 388 residues long: Phosphopentomutase (388 aa).

Positions 10, 282, 287, 323, 324, and 335 each coordinate Mn(2+).

This sequence belongs to the phosphopentomutase family. The cofactor is Mn(2+).

It is found in the cytoplasm. The enzyme catalyses 2-deoxy-alpha-D-ribose 1-phosphate = 2-deoxy-D-ribose 5-phosphate. It carries out the reaction alpha-D-ribose 1-phosphate = D-ribose 5-phosphate. The protein operates within carbohydrate degradation; 2-deoxy-D-ribose 1-phosphate degradation; D-glyceraldehyde 3-phosphate and acetaldehyde from 2-deoxy-alpha-D-ribose 1-phosphate: step 1/2. Isomerase that catalyzes the conversion of deoxy-ribose 1-phosphate (dRib-1-P) and ribose 1-phosphate (Rib-1-P) to deoxy-ribose 5-phosphate (dRib-5-P) and ribose 5-phosphate (Rib-5-P), respectively. The sequence is that of Phosphopentomutase from Carboxydothermus hydrogenoformans (strain ATCC BAA-161 / DSM 6008 / Z-2901).